The following is a 1401-amino-acid chain: DNA-directed RNA polymerase subunit beta' (1401 aa).

Cys70, Cys72, Cys85, and Cys88 together coordinate Zn(2+). Mg(2+) contacts are provided by Asp460, Asp462, and Asp464. Zn(2+) contacts are provided by Cys808, Cys882, Cys889, and Cys892.

Belongs to the RNA polymerase beta' chain family. The RNAP catalytic core consists of 2 alpha, 1 beta, 1 beta' and 1 omega subunit. When a sigma factor is associated with the core the holoenzyme is formed, which can initiate transcription. Mg(2+) serves as cofactor. Requires Zn(2+) as cofactor.

The catalysed reaction is RNA(n) + a ribonucleoside 5'-triphosphate = RNA(n+1) + diphosphate. Functionally, DNA-dependent RNA polymerase catalyzes the transcription of DNA into RNA using the four ribonucleoside triphosphates as substrates. The sequence is that of DNA-directed RNA polymerase subunit beta' from Legionella pneumophila (strain Corby).